Reading from the N-terminus, the 617-residue chain is Isopropyl malate synthase gloH (617 aa).

Residues 47 to 325 (PIWLSTDLRD…ETGLDFSDLL (279 aa)) form the Pyruvate carboxyltransferase domain.

This sequence belongs to the alpha-IPM synthase/homocitrate synthase family. LeuA type 2 subfamily.

The catalysed reaction is 3-methyl-2-oxobutanoate + acetyl-CoA + H2O = (2S)-2-isopropylmalate + CoA + H(+). It participates in mycotoxin biosynthesis. Functionally, 2-isopropylmalate synthase; part of the gene cluster that mediates the biosynthesis of pneumocandins, lipohexapeptides of the echinocandin family that prevent fungal cell wall formation by non-competitive inhibition of beta-1,3-glucan synthase. The 10,12-dimethylmyristoyl side chain is synthesized by the reducing polyketide synthase gloL/GLPKS4. The thioesterase gloN/GLHYD exclusively interacts with gloL/GLPKS4 to maintain turnover of the polyketide side chain. The 10R,12S-dimethylmyristic acid is then transferred to the first thiolation domain of the nonribosomal peptide synthetase gloA/GLNRPS4 by the acyl-AMP ligase gloD/GLligase, followed by its acylation to L-ornithine to trigger elongation of the cyclic hexapeptide. L-ornithine, 4R-hydroxyl-L-proline (generated from L-proline by the dioxygenase gloF/GLOXY2), 3S-hydroxyl-L-homotyrosine (generated by gloG/GLHtyB, gloH/GLHtyA, gloI/GLHtyC, gloJ/GLHtyD and hydroxylated at C-3 by the dioxygenase gloM/GLOXY1), 3R-hydroxyl-L-glutamine (generated from L-glutamine probably by the dioxygenase gloE/GLOXY3) and 3S-hydroxyl-L-proline (generated from L-proline by the dioxygenase gloF/GLOXY2 to yield pneumocandin B0), or 3S-hydroxyl-4S-methyl-L-proline (generated from L-leucine by the dioxygenase gloC/GLOXY4 to yield pneumocandin A0) are sequentially added to the growing chain. The last C domain of gloA/GLNRPS4 is proposed to be responsible for cyclization by condensation to form the peptide bond between L-ornithine and 3S-hydroxyl-4S-methyl-L-proline (for pneumocandin A0) or 3S-hydroxyl-L-proline (for pneumocandin B0). Finally, the subsequent C-4 hydroxylation of 3S-hydroxyl-L-homotyrosine and L-ornithine dihydroxylation at C-4 and C-5 are performed by the cytochrome P450 monooxygenases gloP/GLP450-1 and gloO/GLP450-2, respectively. This Glarea lozoyensis (strain ATCC 20868 / MF5171) protein is Isopropyl malate synthase gloH.